We begin with the raw amino-acid sequence, 214 residues long: Adenylate kinase (214 aa).

An ATP-binding site is contributed by 11–16 (GTGKGT). The tract at residues 31-61 (SSGDLFRFYAKEEKTALAEEIKSYINNGLYV) is NMP. Residues Ser-32, Arg-37, 59–61 (LYV), 87–90 (GYPR), and Gln-94 each bind AMP. The interval 124–163 (LRRSCPQCKRIYNINSVDFKPKVANLCDLCKVELIHRKDD) is LID. Arg-125 contributes to the ATP binding site. Zn(2+) contacts are provided by Cys-128 and Cys-131. Residue 134-135 (IY) coordinates ATP. 2 residues coordinate Zn(2+): Cys-150 and Cys-153. 2 residues coordinate AMP: Arg-160 and Arg-171. Lys-199 contacts ATP.

The protein belongs to the adenylate kinase family. As to quaternary structure, monomer.

Its subcellular location is the cytoplasm. The enzyme catalyses AMP + ATP = 2 ADP. It participates in purine metabolism; AMP biosynthesis via salvage pathway; AMP from ADP: step 1/1. In terms of biological role, catalyzes the reversible transfer of the terminal phosphate group between ATP and AMP. Plays an important role in cellular energy homeostasis and in adenine nucleotide metabolism. The chain is Adenylate kinase from Mycoplasmoides gallisepticum (strain R(low / passage 15 / clone 2)) (Mycoplasma gallisepticum).